Here is a 616-residue protein sequence, read N- to C-terminus: MDYLITAFNRITHWFLTPTNLEYIGSYSLPPGLLRVNDVAVANHKATLDRSFDKYLYEHEINLITKEYRRSPIDEDSILEDFFSGDLPYFEIPFDEHVERGLECMAAAFRPPRPCRPAHILDVKHGYPYKWNVNAEPPFSTDEYFLSQRKTFGEFIRMHEYEHIDKEDFFRRHPNIESHDFLRTVVPPKFGFLKSMIFSWTRRWHHIIKSGFQDSTDLEQTGYFFNRFIFPMLLHTKTAIVKKNDPNKMRTIWGASKPWIIAETMFYWEYLAWIKHNPGATPMLWGYETFTGGWFRLNHELFCGLIQRSFLTLDWSRFDKRAYFPLLRRILYTVKTFLTFEEGYVPTHAAPTHPQWSQENIDRLERLWLWTLENLFEAPIILPDGRMYRRHFAGIPSGLFITQLLDSWYNYTMLATILSALHFDPLHCIIKVQGDDSILRLTTLIPVDQHTNFMDHIVRLADTYFNSIVNVKKSEVRNSLNGCEVLSYRNHNGLPHRDEITMLAQFYHTKARDPTPEITMAQAIGFAYASCANHNRVLWVLEDVYNYYRDLGYRPNRAGLTLTFGDSPDLTMPEMPLDHFPTKSEIRRYHTETHYQNEAQNARTWPRTLFINAPGE.

It carries out the reaction RNA(n) + a ribonucleoside 5'-triphosphate = RNA(n+1) + diphosphate. In terms of biological role, RNA-dependent RNA polymerase which replicates the viral genome. The protein is RNA-directed RNA polymerase of White clover cryptic virus 1 (isolate Boccardo/2004) (WCCV-1).